Here is a 301-residue protein sequence, read N- to C-terminus: GTP cyclohydrolase FolE2 (301 aa).

Belongs to the GTP cyclohydrolase IV family.

The enzyme catalyses GTP + H2O = 7,8-dihydroneopterin 3'-triphosphate + formate + H(+). It participates in cofactor biosynthesis; 7,8-dihydroneopterin triphosphate biosynthesis; 7,8-dihydroneopterin triphosphate from GTP: step 1/1. Converts GTP to 7,8-dihydroneopterin triphosphate. This is GTP cyclohydrolase FolE2 from Pseudomonas syringae pv. tomato (strain ATCC BAA-871 / DC3000).